We begin with the raw amino-acid sequence, 364 residues long: Biotin synthase (364 aa).

The segment at 14-36 (DTIPPGTETPYASPSHARTEEAP) is disordered. The Radical SAM core domain occupies 70 to 308 (RKGPLATTCG…QRDILVCGGR (239 aa)). Cys88, Cys92, and Cys95 together coordinate [4Fe-4S] cluster. Cys164 and Cys233 together coordinate [2Fe-2S] cluster.

This sequence belongs to the radical SAM superfamily. Biotin synthase family. Homodimer. It depends on [4Fe-4S] cluster as a cofactor. [2Fe-2S] cluster is required as a cofactor.

The catalysed reaction is (4R,5S)-dethiobiotin + (sulfur carrier)-SH + 2 reduced [2Fe-2S]-[ferredoxin] + 2 S-adenosyl-L-methionine = (sulfur carrier)-H + biotin + 2 5'-deoxyadenosine + 2 L-methionine + 2 oxidized [2Fe-2S]-[ferredoxin]. It functions in the pathway cofactor biosynthesis; biotin biosynthesis; biotin from 7,8-diaminononanoate: step 2/2. Catalyzes the conversion of dethiobiotin (DTB) to biotin by the insertion of a sulfur atom into dethiobiotin via a radical-based mechanism. The protein is Biotin synthase of Nitratidesulfovibrio vulgaris (strain DSM 19637 / Miyazaki F) (Desulfovibrio vulgaris).